The sequence spans 204 residues: N-(5'-phosphoribosyl)anthranilate isomerase (204 aa).

The protein belongs to the TrpF family.

The catalysed reaction is N-(5-phospho-beta-D-ribosyl)anthranilate = 1-(2-carboxyphenylamino)-1-deoxy-D-ribulose 5-phosphate. It functions in the pathway amino-acid biosynthesis; L-tryptophan biosynthesis; L-tryptophan from chorismate: step 3/5. In Bacillus cereus (strain AH820), this protein is N-(5'-phosphoribosyl)anthranilate isomerase.